A 255-amino-acid chain; its full sequence is tRNA (guanine-N(1)-)-methyltransferase (255 aa).

S-adenosyl-L-methionine is bound by residues glycine 117 and 137–142 (LGDFVL).

It belongs to the RNA methyltransferase TrmD family. In terms of assembly, homodimer.

The protein localises to the cytoplasm. The catalysed reaction is guanosine(37) in tRNA + S-adenosyl-L-methionine = N(1)-methylguanosine(37) in tRNA + S-adenosyl-L-homocysteine + H(+). In terms of biological role, specifically methylates guanosine-37 in various tRNAs. In Paraburkholderia phytofirmans (strain DSM 17436 / LMG 22146 / PsJN) (Burkholderia phytofirmans), this protein is tRNA (guanine-N(1)-)-methyltransferase.